Reading from the N-terminus, the 479-residue chain is MSIVVKNNIHWVGQRDWEVRDFHGTEYKTLRGSSYNSYLIREEKNVLIDTVDHKFSREFVQNLRNEIDLADIDYIVINHAEEDHAGALTELMAQIPDTPIYCTANAIDSINGHHHHPEWNFNVVKTGDTLDIGNGKQLIFVETPMLHWPDSMMTYLTGDAVLFSNDAFGQHYCDEHLFNDEVDQTELFEQCQRYYSNILTPFSRLVTPKITEILGFNLPVDMIATSHGVVWRDNPTQIVELYLKWAADYQEDRITIFYDTMSNNTRMMADAIAQGIAETDPRVAVKIFNIARSDKNEILTNVFRSKGVLVGTSTMNNVMMPKIAGLVEEMTGLRFRNKRASAFGSHGWSGGAVDRLSTRLQDAGFEMSLSLKAKWRPDQDALELCREHGREIARQWALAPLPQSTVNTVVKEETSATTTADLGPRMQCSVCQWIYDPAKGEPMQDVAPGTPWSEVPDNFLCPECSLGKDVFEELASEAK.

The interval 30 to 210 (LRGSSYNSYL…PFSRLVTPKI (181 aa)) is zinc metallo-hydrolase. The Fe cation site is built by H79, E81, D83, H147, D166, and H227. Residues 254 to 393 (ITIFYDTMSN…LCREHGREIA (140 aa)) form the Flavodoxin-like domain. Residues 260–264 (TMSNN) and 342–369 (AFGSHGWSGGAVDRLSTRLQDAGFEMSL) contribute to the FMN site. A Rubredoxin-like domain is found at 423–474 (GPRMQCSVCQWIYDPAKGEPMQDVAPGTPWSEVPDNFLCPECSLGKDVFEEL). Fe cation is bound by residues C428, C431, C461, and C464.

In the N-terminal section; belongs to the zinc metallo-hydrolase group 3 family. As to quaternary structure, homotetramer. The cofactor is Fe cation. It depends on FMN as a cofactor.

The protein localises to the cytoplasm. The protein operates within nitrogen metabolism; nitric oxide reduction. Functionally, anaerobic nitric oxide reductase; uses NADH to detoxify nitric oxide (NO), protecting several 4Fe-4S NO-sensitive enzymes. Has at least 2 reductase partners, only one of which (NorW, flavorubredoxin reductase) has been identified. NO probably binds to the di-iron center; electrons enter from the NorW at rubredoxin and are transferred sequentially to the FMN center and the di-iron center. Also able to function as an aerobic oxygen reductase. The chain is Anaerobic nitric oxide reductase flavorubredoxin from Shigella dysenteriae serotype 1 (strain Sd197).